A 439-amino-acid polypeptide reads, in one-letter code: Acyl-coenzyme A thioesterase 9, mitochondrial (439 aa).

Residues 1–21 (MRRAALRLCALGKGQLTPGRG) constitute a mitochondrion transit peptide. HotDog ACOT-type domains are found at residues 84 to 209 (KDSY…RDSE) and 289 to 401 (ENSK…EKEV). Residue Lys103 is modified to N6-acetyllysine.

This sequence belongs to the acyl coenzyme A hydrolase family. In terms of assembly, interacts with NYAP1, NYAP2 and MYO16.

Its subcellular location is the mitochondrion. The protein localises to the mitochondrion matrix. It is found in the mitochondrion inner membrane. It catalyses the reaction butanoyl-CoA + H2O = butanoate + CoA + H(+). The enzyme catalyses propanoyl-CoA + H2O = propanoate + CoA + H(+). The catalysed reaction is hexadecanoyl-CoA + H2O = hexadecanoate + CoA + H(+). It carries out the reaction octanoyl-CoA + H2O = octanoate + CoA + H(+). It catalyses the reaction decanoyl-CoA + H2O = decanoate + CoA + H(+). The enzyme catalyses tetradecanoyl-CoA + H2O = tetradecanoate + CoA + H(+). The catalysed reaction is 4,8-dimethylnonanoyl-CoA + H2O = 4,8-dimethylnonanoate + CoA + H(+). It carries out the reaction 3-methylbutanoyl-CoA + H2O = 3-methylbutanoate + CoA + H(+). It catalyses the reaction 2-methylpropanoyl-CoA + H2O = 2-methylpropanoate + CoA + H(+). It functions in the pathway lipid metabolism; fatty acid metabolism. With respect to regulation, strongly inhibited by NADH and CoA. In terms of biological role, mitochondrial acyl-CoA thioesterase. Catalyzes the hydrolysis of acyl-CoAs into free fatty acids and coenzyme A (CoA), regulating their respective intracellular levels. Regulates both mitochondrial lipid and amino acid metabolism. This Homo sapiens (Human) protein is Acyl-coenzyme A thioesterase 9, mitochondrial.